A 240-amino-acid chain; its full sequence is MATAMYLEHYLDSIENLPCELQRNFQLMRELDQRTEDKKAEIDILAAEYISTVKTLSPDQRVERLQKIQNAYSKCKEYSDDKVQLAMQTYEMVDKHIRRLDADLARFEADLKDKMEGSDFESSGGRGLKKGRGQKEKRGSRGRGRRTSEEDTPKKKKHKGGSEFTDTILSVHPSDVLDMPVDPNEPTYCLCHQVSYGEMIGCDNPDCPIEWFHFACVDLTTKPKGKWFCPRCVQEKRKKK.

N6-acetyllysine is present on K114. The disordered stretch occupies residues 116 to 165 (EGSDFESSGGRGLKKGRGQKEKRGSRGRGRRTSEEDTPKKKKHKGGSEFT). S118 bears the Phosphoserine mark. R126 bears the Omega-N-methylarginine mark. A PHD-type zinc finger spans residues 186–235 (PTYCLCHQVSYGEMIGCDNPDCPIEWFHFACVDLTTKPKGKWFCPRCVQE). Residues C189, C191, C202, C207, H213, C216, C229, and C232 each contribute to the Zn(2+) site.

The protein belongs to the ING family. As to quaternary structure, component of the HBO1 complex composed of KAT7/HBO1, MEAF6, ING5, and one scaffold subunit: complexes containing BRPF scaffold (BRPF1, BRD1/BRPF2 or BRPF3) direct KAT7/HBO1 specificity towards H3K14ac, while complexes containing JADE scaffold (JADE1, JADE2 and JADE3) mediate acetylation of histone H4. Component of the MOZ/MORF complex composed at least of ING5, KAT6A, KAT6B, MEAF6 and one of BRPF1, BRD1/BRPF2 and BRPF3. Interacts with H3K4me3 and to a lesser extent with H3K4me2. Interacts with EP300 and p53/TP53. Interacts with INCA1. Down-regulated in bone marrow cells in acute myeloid leukemia patients as compared with normal bone marrow cells.

It is found in the nucleus. The protein resides in the chromosome. Functionally, component of the HBO1 complex, which specifically mediates acetylation of histone H3 at 'Lys-14' (H3K14ac) and, to a lower extent, acetylation of histone H4. Component of the MOZ/MORF complex which has a histone H3 acetyltransferase activity. Through chromatin acetylation it may regulate DNA replication and may function as a transcriptional coactivator. Inhibits cell growth, induces a delay in S-phase progression and enhances Fas-induced apoptosis in an INCA1-dependent manner. The protein is Inhibitor of growth protein 5 (ING5) of Homo sapiens (Human).